Here is a 627-residue protein sequence, read N- to C-terminus: CTP synthase (627 aa).

Residues 300 to 554 (CIAVVGKYTK…LASVDRLNQY (255 aa)) form the Glutamine amidotransferase type-1 domain. Active-site for GATase activity residues include cysteine 399, histidine 526, and glutamate 528. Residues serine 567, serine 570, serine 571, and serine 588 each carry the phosphoserine modification. Threonine 595 bears the Phosphothreonine mark. Over residues 599–613 (GISKSCNGSISTSDS) the composition is skewed to polar residues. The disordered stretch occupies residues 599-627 (GISKSCNGSISTSDSEGACGGVDPTNGHK).

The protein belongs to the CTP synthase family. In ovary, expressed in oocytes, follicle cells and nurse cells. Also expressed in larval and adult testis (at protein level). In larvae, expressed in lymph gland, salivary gland, regions of the midgut, testis, optical lobe and trachea. Isoform 1 is expressed in adult testis, ovary, accessory gland and head. Isoform 2 is weakly expressed in ovary.

The protein resides in the cytoplasm. The catalysed reaction is UTP + L-glutamine + ATP + H2O = CTP + L-glutamate + ADP + phosphate + 2 H(+). It functions in the pathway pyrimidine metabolism; CTP biosynthesis via de novo pathway; CTP from UDP: step 2/2. Its function is as follows. Catalyzes the ATP-dependent amination of UTP to CTP with either L-glutamine or ammonia as the source of nitrogen. Constitutes the rate-limiting enzyme in the synthesis of cytosine nucleotides. Functionally, required for assembly of cytoophidium in female germline cells. In nurse cells, CTPsyn filament assembly in the cytoophidium is regulated by Ack kinase which may thereby contribute to the control of CTP production at specific stages of oogenesis and development of the nurse cell membrane. This is CTP synthase from Drosophila melanogaster (Fruit fly).